We begin with the raw amino-acid sequence, 176 residues long: Adenine phosphoribosyltransferase (176 aa).

It belongs to the purine/pyrimidine phosphoribosyltransferase family. As to quaternary structure, homodimer.

The protein localises to the cytoplasm. The enzyme catalyses AMP + diphosphate = 5-phospho-alpha-D-ribose 1-diphosphate + adenine. Its pathway is purine metabolism; AMP biosynthesis via salvage pathway; AMP from adenine: step 1/1. Its function is as follows. Catalyzes a salvage reaction resulting in the formation of AMP, that is energically less costly than de novo synthesis. This Borreliella afzelii (strain PKo) (Borrelia afzelii) protein is Adenine phosphoribosyltransferase.